Consider the following 78-residue polypeptide: U29-theraphotoxin-Cg1a (78 aa).

Residues 1-19 (MRYQTVFWILLIALCTVNP) form the signal peptide. 4 disulfide bridges follow: C42–C56, C49–C60, C55–C77, and C67–C73.

The protein belongs to the neurotoxin 13 (insecticidal toxin ABC) family. 03 (JZTX-59) subfamily. Expressed by the venom gland.

The protein localises to the secreted. In terms of biological role, probable ion channel inhibitor. This is U29-theraphotoxin-Cg1a from Chilobrachys guangxiensis (Chinese earth tiger tarantula).